Consider the following 270-residue polypeptide: Diaminopimelate epimerase (270 aa).

Substrate is bound by residues asparagine 15, glutamine 49, and asparagine 66. Cysteine 75 (proton donor) is an active-site residue. Substrate-binding positions include 76–77 (GN), asparagine 155, asparagine 187, and 204–205 (ER). Cysteine 213 functions as the Proton acceptor in the catalytic mechanism. 214–215 (GS) contacts substrate.

It belongs to the diaminopimelate epimerase family. As to quaternary structure, homodimer.

The protein resides in the cytoplasm. It carries out the reaction (2S,6S)-2,6-diaminopimelate = meso-2,6-diaminopimelate. Its pathway is amino-acid biosynthesis; L-lysine biosynthesis via DAP pathway; DL-2,6-diaminopimelate from LL-2,6-diaminopimelate: step 1/1. Its function is as follows. Catalyzes the stereoinversion of LL-2,6-diaminopimelate (L,L-DAP) to meso-diaminopimelate (meso-DAP), a precursor of L-lysine and an essential component of the bacterial peptidoglycan. This Rickettsia rickettsii (strain Iowa) protein is Diaminopimelate epimerase.